A 1624-amino-acid polypeptide reads, in one-letter code: MHSVYTKYTIILILLVIYQGLPTNTQVASRIFGVGSKSSGPLYRQLIDIYSYTYDNAVFIFEDLPIDVILTQVDYIDYVGLDRCISHEYEEIFNLVQFPLAGQAIVMTYNIPELANLDTRIVIDRQTLGKIWTGEISKWNHPDIIALNPTLNGTLPDKEIKLGYNDDGNVSISGIVQAALSSFYGNFATEFNNAGQLFANMSFANESRCVNIGPSSRERFDWVKNTTYSLTFVNYADVFNNTNPNISVMNMYNKAGNLVEPSLESVQFAMADFKDEYSNNNFALDVFDAPGNNSWPLSYVNYIVMSKRFFQLDCSRADVVLKFIAWVYTNTAASKALTQNQFYPLDNTLKKVSIDNIYIVKCNNVSVSEQQYLISFGGSTSIVPSWLTAFTSGSIVAKYYSTLSSNSIELLTTHGCDFAVTINGVDQKFYQEIEDLAVMPLAAFSIVPAYNIPEIVGKTLVLDIDVIVKIYLGEITNWNDTKIRNLNPEISNYLPNAIINVVVQNIESDINQIFTKFLSQESEIFSQEIGQTYNPDLSLFNSSVIFVDDIDGLGDELIDNKYSFGFWTDFGVRLLSRVQTVQMASLKINDDIIEPNYDTLKNAISSESNQIARSTNSNVWPITSMISIVYPETTMKNKDKAVAIAEFMYWTQYDPLAINSANNKGYYLASSDPQLRSVVLDLLKNFKFEDESVSSYANCIYQGSICSNFGTCIESACICNSSRTGTYCEKIITDSENNTLIIILATVIPIACIFGLLLLTLLIVIIFLLKHRNTTNNDWEIDFSELEIGETLGTGGYGEVYKSIWKGTEVAVKLISSKHVSKDMERSFFEEVKIMTSLRHPNVVLFMAASTKSPNMCIVMEFMSLGSLYDLLGNELIPEIPYALKIKMAYQASKGMHFLHSSGIVHRDLKSLNLLLDSKWNVKVSDFGLTKVKSELDKKKTNDNIIGTIHWIAPEILNDSTEVDYILADVYSFGIILWELLTREQPYKGMTPAAIAVSVIRDGMRPPISDEAVTAHSIEYIDLIKQCWHSDTIIRPTFLEIMTRLSNILGDSSNMTSGTSSSSLSSGGIGKSITDSKSSNSRSSVESSNTSNTFRGIDRHNSHPTGEVTVAFIDIISASKLWEYDPDGMCESTKMYNEIIRRVTKKYGGYESFISKDRNSGEGSFCLVFSDAIQAINSCEEMQLQLLNANWPKKILQHPAAAEEFDRTDQLIFRGLRVRMALHCGSVKISQDPMTRKYQYSGSTVNITGKITTLTHGGQIIVSENLYQKVNNDFTFITVGKIDIPDYPSKMTLYEIKFEILKNRFFGGITYVNYNDDTDSGTADDSNYDSGKIIDIDYMADIDKEDSFLTSANMCRWIINYDEISIGKQIGLGSYGIVFNGKWKGVDVAVKKFVKQKLSETQLLEFRAEMAFLSELKHSNIVTFIGACIKKPNICIVTEYMRMGNLRDVLKNPDIKITFANKLKLLYGAAMGIDYLHSSNPMIVHRDIKPANILVDEHFNVKIADFGFARIKEDNTTMTRCGTPCWTAPEVIRGEKYCEKADVFSFGVVMWEVLTGKEPFAECNFMKVSLDILEGGRPIIPSDCPHEFAKLIKKCWHAKAHKRPTMTEVVQQLMLITEQFDHKV.

An N-terminal signal peptide occupies residues 1-25 (MHSVYTKYTIILILLVIYQGLPTNT). 13 N-linked (GlcNAc...) asparagine; by host glycosylation sites follow: Asn152, Asn169, Asn200, Asn205, Asn225, Asn240, Asn245, Asn292, Asn364, Asn479, Asn541, Asn720, and Asn737. The chain crosses the membrane as a helical span at residues 747–767 (VIPIACIFGLLLLTLLIVIIF). The 264-residue stretch at 786-1049 (LEIGETLGTG…EIMTRLSNIL (264 aa)) folds into the Protein kinase 1 domain. Residues 792-800 (LGTGGYGEV) and Lys813 contribute to the ATP site. Catalysis depends on Asp908, which acts as the Proton acceptor. The segment covering 1054-1093 (NMTSGTSSSSLSSGGIGKSITDSKSSNSRSSVESSNTSNT) has biased composition (low complexity). Residues 1054-1101 (NMTSGTSSSSLSSGGIGKSITDSKSSNSRSSVESSNTSNTFRGIDRHN) form a disordered region. Residues 1109-1252 (TVAFIDIISA…STVNITGKIT (144 aa)) enclose the Guanylate cyclase domain. A Protein kinase 2 domain is found at 1364–1615 (ISIGKQIGLG…MTEVVQQLML (252 aa)). Residues 1370–1378 (IGLGSYGIV) and Lys1391 each bind ATP. Asp1487 serves as the catalytic Proton acceptor.

The protein localises to the membrane. It carries out the reaction L-seryl-[protein] + ATP = O-phospho-L-seryl-[protein] + ADP + H(+). The catalysed reaction is L-threonyl-[protein] + ATP = O-phospho-L-threonyl-[protein] + ADP + H(+). This chain is Putative serine/threonine-protein kinase/receptor R831, found in Acanthamoeba polyphaga (Amoeba).